Reading from the N-terminus, the 526-residue chain is Cytochrome P450 monooxygenase patI (526 aa).

At 1–6 (MDILQL) the chain is on the cytoplasmic side. A helical transmembrane segment spans residues 7–29 (APTHLLAILLSSTSALFLITYLL). The Lumenal portion of the chain corresponds to 30 to 526 (RAGHRPSDLP…EAQEVFARFD (497 aa)). N81 is a glycosylation site (N-linked (GlcNAc...) asparagine). C446 serves as a coordination point for heme.

It belongs to the cytochrome P450 family. Requires heme as cofactor.

Its subcellular location is the endoplasmic reticulum membrane. It catalyses the reaction 3-hydroxybenzyl alcohol + reduced [NADPH--hemoprotein reductase] + O2 = gentisyl alcohol + oxidized [NADPH--hemoprotein reductase] + H2O + H(+). The protein operates within mycotoxin biosynthesis; patulin biosynthesis. Functionally, cytochrome P450 monooxygenase; part of the gene cluster that mediates the biosynthesis of patulin, an acetate-derived tetraketide mycotoxin produced by several fungal species that shows antimicrobial properties against several bacteria. PatI catalyzes the conversion of m-hydroxybenzyl alcohol into gentisyl alcohol. The pathway begins with the synthesis of 6-methylsalicylic acid by the polyketide synthase (PKS) patK via condensation of acetate and malonate units. The 6-methylsalicylic acid decarboxylase patG then catalyzes the decarboxylation of 6-methylsalicylic acid to yield m-cresol (also known as 3-methylphenol). These first reactions occur in the cytosol. The intermediate m-cresol is then transported into the endoplasmic reticulum where the cytochrome P450 monooxygenase patH converts it to m-hydroxybenzyl alcohol, which is further converted to gentisyl alcohol by the cytochrome P450 monooxygenase patI. The oxidoreductases patJ and patO further convert gentisyl alcohol to isoepoxydon in the vacuole. PatN catalyzes then the transformation of isoepoxydon into phyllostine. The cluster protein patF is responsible for the conversion from phyllostine to neopatulin whereas the alcohol dehydrogenase patD converts neopatulin to E-ascladiol. The steps between isoepoxydon and E-ascladiol occur in the cytosol, and E-ascladiol is probably secreted to the extracellular space by one of the cluster-specific transporters patC or patM. Finally, the secreted patulin synthase patE catalyzes the conversion of E-ascladiol to patulin. This chain is Cytochrome P450 monooxygenase patI, found in Penicillium expansum (Blue mold rot fungus).